The chain runs to 144 residues: MPKNKGKGGKNRRRGKNENESEKRELVFKEDGQEYAQVIKMLGNGRLEALCFDGVKRLCHIRGKLRKKVWINTSDIILVGLRDYQDNKADVILKYNADEARSLKAYGELPEHAKINETDTFGPGDDDEIQFDDIGDDDEDIDDI.

Basic residues predominate over residues 1-15 (MPKNKGKGGKNRRRG). Positions 1-26 (MPKNKGKGGKNRRRGKNENESEKREL) are disordered. Basic and acidic residues predominate over residues 16–26 (KNENESEKREL). In terms of domain architecture, S1-like spans 22-96 (EKRELVFKED…NKADVILKYN (75 aa)). Residue Lys88 forms a Glycyl lysine isopeptide (Lys-Gly) (interchain with G-Cter in ubiquitin) linkage. Positions 114–144 (KINETDTFGPGDDDEIQFDDIGDDDEDIDDI) are disordered. The segment covering 124-144 (GDDDEIQFDDIGDDDEDIDDI) has biased composition (acidic residues).

It belongs to the eIF-1A family. Component of the 43S pre-initiation complex (43S PIC), which is composed of the 40S ribosomal subunit, EIF1, eIF1A (EIF1AX), eIF3 complex, EIF5 and eIF2-GTP-initiator tRNA complex (eIF2 ternary complex). Interacts with EIF5; this interaction contributes to the maintenance of EIF1 within the open 43S PIC. Interacts through its C-terminal domain (CTD) with the CTD of EIF5B; from the location of the start codon by the 43S complex until the formation of the 80S complex. Ubiquitous.

The protein resides in the cytoplasm. Its function is as follows. Component of the 43S pre-initiation complex (43S PIC), which binds to the mRNA cap-proximal region, scans mRNA 5'-untranslated region, and locates the initiation codon. This protein enhances formation of the cap-proximal complex. Together with EIF1, facilitates scanning, start codon recognition, promotion of the assembly of 48S complex at the initiation codon (43S PIC becomes 48S PIC after the start codon is reached), and dissociation of aberrant complexes. After start codon location, together with EIF5B orients the initiator methionine-tRNA in a conformation that allows 60S ribosomal subunit joining to form the 80S initiation complex. Is released after 80S initiation complex formation, just after GTP hydrolysis by EIF5B, and before release of EIF5B. Its globular part is located in the A site of the 40S ribosomal subunit. Its interaction with EIF5 during scanning contribute to the maintenance of EIF1 within the open 43S PIC. In contrast to yeast orthologs, does not bind EIF1. The protein is Eukaryotic translation initiation factor 1A, Y-chromosomal (EIF1AY) of Homo sapiens (Human).